Consider the following 250-residue polypeptide: ATP synthase subunit a (250 aa).

The next 6 helical transmembrane spans lie at 26–46 (FTNASLFMVATVGAAAGFLYL), 84–104 (FFPMVFSLFMFILTANLLGMV), 114–134 (IIVTFALAVFVIGTVILYGFY), 143–163 (LFVPHGVPGALLPLVVAIEII), 193–213 (FVASLSAFGALGIGGAILPLI), and 216–236 (VALTGLEFLVAFLQAYVFAVL).

It belongs to the ATPase A chain family. In terms of assembly, F-type ATPases have 2 components, CF(1) - the catalytic core - and CF(0) - the membrane proton channel. CF(1) has five subunits: alpha(3), beta(3), gamma(1), delta(1), epsilon(1). CF(0) has three main subunits: a(1), b(2) and c(9-12). The alpha and beta chains form an alternating ring which encloses part of the gamma chain. CF(1) is attached to CF(0) by a central stalk formed by the gamma and epsilon chains, while a peripheral stalk is formed by the delta and b chains.

Its subcellular location is the cell inner membrane. Key component of the proton channel; it plays a direct role in the translocation of protons across the membrane. In Sinorhizobium medicae (strain WSM419) (Ensifer medicae), this protein is ATP synthase subunit a.